Here is a 130-residue protein sequence, read N- to C-terminus: Small ribosomal subunit protein uS8 (130 aa).

Belongs to the universal ribosomal protein uS8 family. As to quaternary structure, part of the 30S ribosomal subunit.

In terms of biological role, one of the primary rRNA binding proteins, it binds directly to 16S rRNA central domain where it helps coordinate assembly of the platform of the 30S subunit. In Methanobrevibacter smithii (strain ATCC 35061 / DSM 861 / OCM 144 / PS), this protein is Small ribosomal subunit protein uS8.